Consider the following 564-residue polypeptide: NAD-dependent malic enzyme (564 aa).

Residue Y102 is the Proton donor of the active site. R155 is a binding site for NAD(+). K173 acts as the Proton acceptor in catalysis. Residues E244, D245, and D268 each coordinate a divalent metal cation. 2 residues coordinate NAD(+): D268 and N417.

It belongs to the malic enzymes family. As to quaternary structure, homotetramer. The cofactor is Mg(2+). Requires Mn(2+) as cofactor.

It carries out the reaction (S)-malate + NAD(+) = pyruvate + CO2 + NADH. The enzyme catalyses oxaloacetate + H(+) = pyruvate + CO2. The protein is NAD-dependent malic enzyme of Pseudomonas aeruginosa (strain UCBPP-PA14).